Consider the following 255-residue polypeptide: tRNA (guanine-N(1)-)-methyltransferase (255 aa).

Residues glycine 113 and isoleucine 133–leucine 138 contribute to the S-adenosyl-L-methionine site.

This sequence belongs to the RNA methyltransferase TrmD family. In terms of assembly, homodimer.

The protein resides in the cytoplasm. The catalysed reaction is guanosine(37) in tRNA + S-adenosyl-L-methionine = N(1)-methylguanosine(37) in tRNA + S-adenosyl-L-homocysteine + H(+). Specifically methylates guanosine-37 in various tRNAs. The sequence is that of tRNA (guanine-N(1)-)-methyltransferase from Shigella flexneri serotype 5b (strain 8401).